Reading from the N-terminus, the 103-residue chain is ATP synthase subunit f, mitochondrial (103 aa).

The N-terminal 6 residues, 1–6 (MIFRRQ), are a transit peptide targeting the mitochondrion.

In terms of assembly, F-type ATP synthases have 2 components, the catalytic core F(1) and the membrane-embedded component F(0), linked together by a central stalk and a peripheral stalk. The central stalk, also called rotor shaft, is often seen as part of F(1). The peripheral stalk is seen as part of F(0). F(0) contains the membrane channel next to the rotor. F-type ATP synthases form dimers but each monomer functions independently in ATP generation. The dimer consists of 17 different polypeptides: ATP1 (subunit alpha, 3 molecules per monomer, part of F(1)), ATP2 (subunit beta, 3 copies per monomer, part of F(1)), ATP3 (subunit gamma, part of the central stalk), ATP4 (subunit b, part of the peripheral stalk), ATP5/OSCP (subunit 5/OSCP, part of the peripheral stalk), ATP6 (subunit a, part of the peripheral stalk), ATP7 (subunit d, part of the peripheral stalk), ATP8 (subunit 8, part of the peripheral stalk), OLI1 (subunit c, part of the rotor, 10 molecules per monomer), ATP14 (subunit h, part of the peripheral stalk), ATP15 (subunit epsilon, part of the central stalk), ATP16 (subunit delta, part of the central stalk), ATP17 (subunit f, part of the peripheral stalk), ATP18 (subunit i/j, part of the peripheral stalk), ATP19 (subunit k, dimer-specific, at interface between monomers), ATP20 (subunit g, at interface between monomers), TIM11 (subunit e, at interface between monomers).

It is found in the mitochondrion inner membrane. Mitochondrial membrane ATP synthase (F(1)F(0) ATP synthase or Complex V) produces ATP from ADP in the presence of a proton gradient across the membrane which is generated by electron transport complexes of the respiratory chain. F-type ATP synthases consist of two structural domains, F(1) - containing the extramembraneous catalytic core, and F(0) - containing the membrane proton channel, linked together by a central stalk and a peripheral stalk. During catalysis, ATP synthesis in the catalytic domain of F(1) is coupled via a rotary mechanism of the central stalk subunits to proton translocation. Part of the complex F(0) domain. Minor subunit located with subunit a/ATP6 in the membrane. The sequence is that of ATP synthase subunit f, mitochondrial from Yarrowia lipolytica (strain CLIB 122 / E 150) (Yeast).